Reading from the N-terminus, the 95-residue chain is Large ribosomal subunit protein bL28 (95 aa).

Residues 1-22 form a disordered region; the sequence is MSRRCELTGKGPMTGNNVSHAN.

It belongs to the bacterial ribosomal protein bL28 family.

This is Large ribosomal subunit protein bL28 from Ruegeria pomeroyi (strain ATCC 700808 / DSM 15171 / DSS-3) (Silicibacter pomeroyi).